A 484-amino-acid chain; its full sequence is Serine hydroxymethyltransferase, cytosolic (484 aa).

Alanine 2 carries the post-translational modification N-acetylalanine. At asparagine 6 the chain carries Deamidated asparagine; alternate. The isoaspartyl glycine isopeptide (Asn-Gly); alternate cross-link spans 6–7 (NG). The Nucleophile role is filled by cysteine 204. Histidine 256 acts as the Proton donor in catalysis. Lysine 257 carries the post-translational modification N6-(pyridoxal phosphate)lysine.

The protein belongs to the SHMT family. Homotetramer. Identified in complex with ABRAXAS2 and the other subunits of the BRISC complex, at least composed of ABRAXAS2, BRCC3/BRCC36, BABAM2 and BABAM1/NBA1. Requires pyridoxal 5'-phosphate as cofactor. Post-translationally, deamidation of asparagine produces alternatively aspartate or isoaspartate, which in turn can be converted to aspartate through carboxylmethylation/demethylation.

It localises to the cytoplasm. It carries out the reaction (6R)-5,10-methylene-5,6,7,8-tetrahydrofolate + glycine + H2O = (6S)-5,6,7,8-tetrahydrofolate + L-serine. It participates in one-carbon metabolism; tetrahydrofolate interconversion. Its function is as follows. Interconversion of serine and glycine. This Oryctolagus cuniculus (Rabbit) protein is Serine hydroxymethyltransferase, cytosolic (SHMT1).